The primary structure comprises 204 residues: Urease accessory protein UreG (204 aa).

Residue 11–18 participates in GTP binding; sequence GPVGAGKT.

The protein belongs to the SIMIBI class G3E GTPase family. UreG subfamily. Homodimer. UreD, UreF and UreG form a complex that acts as a GTP-hydrolysis-dependent molecular chaperone, activating the urease apoprotein by helping to assemble the nickel containing metallocenter of UreC. The UreE protein probably delivers the nickel.

Its subcellular location is the cytoplasm. Functionally, facilitates the functional incorporation of the urease nickel metallocenter. This process requires GTP hydrolysis, probably effectuated by UreG. This chain is Urease accessory protein UreG, found in Staphylococcus epidermidis (strain ATCC 35984 / DSM 28319 / BCRC 17069 / CCUG 31568 / BM 3577 / RP62A).